We begin with the raw amino-acid sequence, 294 residues long: UDP-3-O-acyl-N-acetylglucosamine deacetylase (294 aa).

Residues His75, His232, and Asp236 each contribute to the Zn(2+) site. The Proton donor role is filled by His259.

Belongs to the LpxC family. Zn(2+) serves as cofactor.

The catalysed reaction is a UDP-3-O-[(3R)-3-hydroxyacyl]-N-acetyl-alpha-D-glucosamine + H2O = a UDP-3-O-[(3R)-3-hydroxyacyl]-alpha-D-glucosamine + acetate. It functions in the pathway glycolipid biosynthesis; lipid IV(A) biosynthesis; lipid IV(A) from (3R)-3-hydroxytetradecanoyl-[acyl-carrier-protein] and UDP-N-acetyl-alpha-D-glucosamine: step 2/6. Functionally, catalyzes the hydrolysis of UDP-3-O-myristoyl-N-acetylglucosamine to form UDP-3-O-myristoylglucosamine and acetate, the committed step in lipid A biosynthesis. The sequence is that of UDP-3-O-acyl-N-acetylglucosamine deacetylase from Campylobacter jejuni subsp. jejuni serotype O:6 (strain 81116 / NCTC 11828).